Consider the following 503-residue polypeptide: uncharacterized protein (503 aa).

ABC transporter domains are found at residues Val8 to Asp249 and Ile261 to Ile499. Position 43–50 (Gly43–Ser50) interacts with ATP.

The protein belongs to the ABC transporter superfamily.

Its function is as follows. Probably part of a binding-protein-dependent transport system YphDEF. Probably responsible for energy coupling to the transport system. This is an uncharacterized protein from Escherichia coli (strain K12).